Consider the following 310-residue polypeptide: Homoserine kinase (310 aa).

91 to 101 serves as a coordination point for ATP; sequence PIGSGLGSSAC.

It belongs to the GHMP kinase family. Homoserine kinase subfamily.

It localises to the cytoplasm. The enzyme catalyses L-homoserine + ATP = O-phospho-L-homoserine + ADP + H(+). The protein operates within amino-acid biosynthesis; L-threonine biosynthesis; L-threonine from L-aspartate: step 4/5. Its function is as follows. Catalyzes the ATP-dependent phosphorylation of L-homoserine to L-homoserine phosphate. This chain is Homoserine kinase, found in Escherichia coli (strain K12 / MC4100 / BW2952).